The following is a 115-amino-acid chain: Tyrosine-protein phosphatase 23 (115 aa).

The Tyrosine-protein phosphatase domain occupies 1–115 (WMMIVEQKCR…EIGGDAPMVV (115 aa)). Residue aspartate 83 coordinates substrate.

This sequence belongs to the protein-tyrosine phosphatase family.

The enzyme catalyses O-phospho-L-tyrosyl-[protein] + H2O = L-tyrosyl-[protein] + phosphate. This is Tyrosine-protein phosphatase 23 (STY-23) from Styela plicata (Wrinkled sea squirt).